We begin with the raw amino-acid sequence, 161 residues long: DNA-binding protein inhibitor ID-4 (161 aa).

Residues 52-104 form the bHLH domain; sequence AAEAAADEPALCLQCDMNDCYSRLRRLVPTIPPNKKVSKVEILQHVIDYILDL.

As to quaternary structure, heterodimer with other HLH proteins.

The protein resides in the nucleus. Functionally, transcriptional regulator (lacking a basic DNA binding domain) which negatively regulates the basic helix-loop-helix (bHLH) transcription factors by forming heterodimers and inhibiting their DNA binding and transcriptional activity. Implicated in regulating a variety of cellular processes, including cellular growth, senescence, differentiation, apoptosis, angiogenesis, and neoplastic transformation. This Mus musculus (Mouse) protein is DNA-binding protein inhibitor ID-4 (Id4).